We begin with the raw amino-acid sequence, 418 residues long: Oxalate:formate antiporter (418 aa).

A run of 12 helical transmembrane segments spans residues 17 to 37, 48 to 68, 84 to 104, 108 to 128, 141 to 161, 172 to 192, 222 to 242, 250 to 270, 288 to 308, 311 to 331, 350 to 370, and 378 to 398; these read WFYL…QYSW, LGVS…IQAG, IPLM…GMVD, ALYA…GIAM, LASG…LPLI, AAFM…AFVI, FWVL…LVAN, LGLA…FNGG, MSVV…IAAL, VAFI…YALF, FFWA…AAIA, and AFLI…FVIP. An oxalate-binding site is contributed by K355.

It belongs to the major facilitator superfamily. OFA (TC 2.A.1.11) family. As to quaternary structure, monomer.

It localises to the cell inner membrane. Functionally, anion transporter that carries out the exchange of divalent oxalate with monovalent formate, the product of oxalate decarboxylation, at the plasma membrane, and in doing so catalyzes the vectorial portion of a proton-motive metabolic cycle that drives ATP synthesis. In Oxalobacter formigenes, this protein is Oxalate:formate antiporter (oxlT).